The sequence spans 346 residues: Methylthioribose-1-phosphate isomerase (346 aa).

Residues 46 to 48 (RGA), R89, and Q196 each bind substrate. D237 functions as the Proton donor in the catalytic mechanism. 247 to 248 (NK) contacts substrate.

Belongs to the eIF-2B alpha/beta/delta subunits family. MtnA subfamily.

It carries out the reaction 5-(methylsulfanyl)-alpha-D-ribose 1-phosphate = 5-(methylsulfanyl)-D-ribulose 1-phosphate. It participates in amino-acid biosynthesis; L-methionine biosynthesis via salvage pathway; L-methionine from S-methyl-5-thio-alpha-D-ribose 1-phosphate: step 1/6. Functionally, catalyzes the interconversion of methylthioribose-1-phosphate (MTR-1-P) into methylthioribulose-1-phosphate (MTRu-1-P). The sequence is that of Methylthioribose-1-phosphate isomerase from Trichlorobacter lovleyi (strain ATCC BAA-1151 / DSM 17278 / SZ) (Geobacter lovleyi).